A 388-amino-acid chain; its full sequence is Galactokinase (388 aa).

Residue glutamate 33 to aspartate 36 coordinates substrate. Residues serine 67 and glycine 124–serine 130 each bind ATP. Mg(2+) is bound by residues serine 130 and glutamate 162. The active-site Proton acceptor is the aspartate 174. Tyrosine 224 lines the substrate pocket.

This sequence belongs to the GHMP kinase family. GalK subfamily.

It localises to the cytoplasm. The catalysed reaction is alpha-D-galactose + ATP = alpha-D-galactose 1-phosphate + ADP + H(+). The protein operates within carbohydrate metabolism; galactose metabolism. Its function is as follows. Catalyzes the transfer of the gamma-phosphate of ATP to D-galactose to form alpha-D-galactose-1-phosphate (Gal-1-P). The chain is Galactokinase from Lacticaseibacillus paracasei (strain ATCC 334 / BCRC 17002 / CCUG 31169 / CIP 107868 / KCTC 3260 / NRRL B-441) (Lactobacillus paracasei).